We begin with the raw amino-acid sequence, 931 residues long: Mitochondrial cox1 translation regulator ppr4 (931 aa).

The transit peptide at 1–16 (MSKSFAYRHIWCFWRF) directs the protein to the mitochondrion. 7 PPR repeats span residues 247–277 (NEVL…MYRT), 282–316 (SFTA…RPKI), 429–461 (HLLN…KIKV), 462–496 (DERT…GIKT), 497–531 (SNQA…GITE), 598–632 (NVVH…GKAP), and 683–713 (PPSL…YLEY).

In terms of assembly, component of the MRH5C complex, composed of mrh5, ppr4, mtf2, and sls1. Proteins mtf2 and sls1 form a subcomplex that serves as a scaffold to bring mrh5 and ppr4 together. The MRH5C complex associates with the small subunit of the mitochondrial ribosome.

The protein localises to the mitochondrion. RNA-binding translation activation factor that as part of the MRH5C complex specifically recruits cox1 mRNA to the mitochondrial ribosome for translation initiation. This Schizosaccharomyces pombe (strain 972 / ATCC 24843) (Fission yeast) protein is Mitochondrial cox1 translation regulator ppr4.